Reading from the N-terminus, the 244-residue chain is 1-(5-phosphoribosyl)-5-[(5-phosphoribosylamino)methylideneamino] imidazole-4-carboxamide isomerase (244 aa).

D10 functions as the Proton acceptor in the catalytic mechanism. The active-site Proton donor is the D132.

This sequence belongs to the HisA/HisF family.

It localises to the cytoplasm. The catalysed reaction is 1-(5-phospho-beta-D-ribosyl)-5-[(5-phospho-beta-D-ribosylamino)methylideneamino]imidazole-4-carboxamide = 5-[(5-phospho-1-deoxy-D-ribulos-1-ylimino)methylamino]-1-(5-phospho-beta-D-ribosyl)imidazole-4-carboxamide. It functions in the pathway amino-acid biosynthesis; L-histidine biosynthesis; L-histidine from 5-phospho-alpha-D-ribose 1-diphosphate: step 4/9. The protein is 1-(5-phosphoribosyl)-5-[(5-phosphoribosylamino)methylideneamino] imidazole-4-carboxamide isomerase of Xanthomonas campestris pv. campestris (strain 8004).